Reading from the N-terminus, the 339-residue chain is Protein H339R (339 aa).

It belongs to the asfivirus H339R family. Interacts with host NACA (alpha chain of nascent polypeptide-associated complex).

The protein resides in the host cytoplasm. It is found in the host nucleus. The chain is Protein H339R from African swine fever virus (isolate Tick/South Africa/Pretoriuskop Pr4/1996) (ASFV).